Reading from the N-terminus, the 331-residue chain is Aldo-keto reductase YhdN (331 aa).

NADP(+)-binding positions include 20–21 and Asp-52; that span reads TW. Tyr-57 acts as the Proton donor in catalysis. Residues Gln-175, 203 to 208, Lys-214, Arg-227, 280 to 282, and Gln-286 contribute to the NADP(+) site; these read YGSLCR and GAR.

This sequence belongs to the aldo/keto reductase family. Aldo/keto reductase 11 subfamily. Monomer.

Its function is as follows. Aldo-keto reductase (AKR) that displays broad substrate specificity in vitro. Is able to reduce the standard AKR substrates DL-glyceraldehyde, D-erythrose, methylglyoxal, p-nitrobenzaldehyde, benzaldehyde and butyraldehyde, in the presence of NADPH. Cannot use NADH as a cosubstrate. Does not act on glucose, 2-pyridine carboxyaldehyde, fructose and xylose. The physiological function of this enzyme is not clear. May play a role in bacterial stress response and/or in detoxification of reactive aldehydes. The sequence is that of Aldo-keto reductase YhdN (yhdN) from Bacillus subtilis (strain 168).